An 86-amino-acid polypeptide reads, in one-letter code: Small ribosomal subunit protein uS15 (86 aa).

This sequence belongs to the universal ribosomal protein uS15 family. As to quaternary structure, part of the 30S ribosomal subunit. Forms a bridge to the 50S subunit in the 70S ribosome, contacting the 23S rRNA.

One of the primary rRNA binding proteins, it binds directly to 16S rRNA where it helps nucleate assembly of the platform of the 30S subunit by binding and bridging several RNA helices of the 16S rRNA. Functionally, forms an intersubunit bridge (bridge B4) with the 23S rRNA of the 50S subunit in the ribosome. This is Small ribosomal subunit protein uS15 from Neorickettsia sennetsu (strain ATCC VR-367 / Miyayama) (Ehrlichia sennetsu).